The sequence spans 433 residues: MSIITDIYAREVLDSRGNPTLEVEVYTEDGAFGRGMVPSGASTGEHEAVELRDGDKSRYNGLGTQKAVDNVNNIIAEAIIGYEVTDQQAIDRAMIALDGTENKGKLGANAILGVSIAAARAAADELGVPLYNYLGGFNAKVLPTPMMNIINGGSHSDAPIAFQEFMIVPVGAPTFKEALRWGAEIFHALKKILKARGLETAVGDEGGFAPKFDGTEDGVETILKAIEAAGYKAGEDGVMIGFDCASSEFYENGVYDYTKFEGEGGKKLSASEQVDYLEELVSKYPIITIEDGMDENDWDGWKILTERLGKKVQLVGDDFFVTNTKYLERGIRENASNAILIKVNQIGTLTETFEAIEMAKEAGFTAIVSHRSGETEDSTISDIAVATNAGQIKTGSLSRTDRMAKYNQLLRIEDQLAEVAQYKGLKAFYNLKK.

Residues 34-56 form a disordered region; that stretch reads RGMVPSGASTGEHEAVELRDGDK. A compositionally biased stretch (basic and acidic residues) spans 44 to 56; it reads GEHEAVELRDGDK. Position 163 (glutamine 163) interacts with (2R)-2-phosphoglycerate. The active-site Proton donor is glutamate 205. Positions 243, 290, and 317 each coordinate Mg(2+). Lysine 342, arginine 371, serine 372, and lysine 393 together coordinate (2R)-2-phosphoglycerate. Catalysis depends on lysine 342, which acts as the Proton acceptor.

It belongs to the enolase family. It depends on Mg(2+) as a cofactor.

It is found in the cytoplasm. The protein resides in the secreted. The protein localises to the cell surface. It catalyses the reaction (2R)-2-phosphoglycerate = phosphoenolpyruvate + H2O. Its pathway is carbohydrate degradation; glycolysis; pyruvate from D-glyceraldehyde 3-phosphate: step 4/5. Functionally, catalyzes the reversible conversion of 2-phosphoglycerate (2-PG) into phosphoenolpyruvate (PEP). It is essential for the degradation of carbohydrates via glycolysis. This chain is Enolase 2, found in Lactococcus lactis subsp. cremoris (strain SK11).